We begin with the raw amino-acid sequence, 232 residues long: Ornithine carbamoyltransferase (232 aa).

Residues Gln-15, Arg-39, and 66–69 each bind carbamoyl phosphate; that span reads HPTQ. Residues Asn-99, Asp-163, and 167 to 168 each bind L-ornithine; that span reads SM. Carbamoyl phosphate contacts are provided by residues 204-207 and Thr-232; that span reads HCLP.

It belongs to the aspartate/ornithine carbamoyltransferase superfamily. OTCase family.

Its subcellular location is the cytoplasm. The enzyme catalyses carbamoyl phosphate + L-ornithine = L-citrulline + phosphate + H(+). Its pathway is amino-acid biosynthesis; L-arginine biosynthesis; L-arginine from L-ornithine and carbamoyl phosphate: step 1/3. Functionally, reversibly catalyzes the transfer of the carbamoyl group from carbamoyl phosphate (CP) to the N(epsilon) atom of ornithine (ORN) to produce L-citrulline. The polypeptide is Ornithine carbamoyltransferase (argF) (Neisseria perflava).